Reading from the N-terminus, the 541-residue chain is MDRFGDISEGEVDHSFFDSDFEDAKKCESNSIFDKQNDDDLKEGINKDTKNVNLKFGVQNDHLKEKIDNNTENVNLKLGLQTTENYLTQKGNERKANFSSKEQHIENDPTQARSSSVLTSSRSKKSCDATKGHKLNLPVPDRIPKIVKGEDDYYTDGEESSDDGKKYVRSKSAKPSSNLKKNVSKKYSSSSLSSSSSRSNSDCSDMGSDRQRRSESHSSGKCVSSVTPSSPKQRCKSGRKSSAQPSSTKQKTGDYHESEGNVPDITPLSTPDVSPAQSLELGQPPDQKVKVKKQENVSRDVYEDAEALKNDSRCVKSAKRKEKHGQSFAPKSSVLDANLDRRSKQKVLHDTMDLNHLLKAFLQLDKKGPQKHHFEQPAIIPRKNYSFTREEVRQIDRENQRLLKELSRQAEKPGSKSTIPGRSIGHPPKLYHSALNRQREQQRIERENMALLKRLEAVKPTVGMKRSEQLMDYHRNMSYLNPSPSVRRVRSTLGHYSPLRGASRTSSATSGLSCKTDRSVLDTSNGFLLRPKPPNVRTAWL.

2 positions are modified to phosphoserine: Ser8 and Ser19. Disordered regions lie at residues 28-47 (ESNS…GINK), 93-296 (ERKA…KQEN), 313-337 (RCVK…VLDA), 406-430 (LSRQ…PPKL), and 495-514 (HYSP…GLSC). Composition is skewed to basic and acidic residues over residues 35-47 (KQND…GINK), 93-107 (ERKA…HIEN), and 142-151 (RIPKIVKGED). The span at 152–161 (DYYTDGEESS) shows a compositional bias: acidic residues. Residue Thr155 is modified to Phosphothreonine. Phosphoserine occurs at positions 160 and 161. Positions 176–201 (SSNLKKNVSKKYSSSSLSSSSSRSNS) are enriched in low complexity. Residues 207-218 (GSDRQRRSESHS) show a composition bias toward basic and acidic residues. 2 stretches are compositionally biased toward polar residues: residues 219 to 232 (SGKC…SSPK) and 240 to 250 (KSSAQPSSTKQ). Residue Ser230 is modified to Phosphoserine. Ser258 carries the phosphoserine modification. The span at 267–277 (PLSTPDVSPAQ) shows a compositional bias: polar residues. Positions 287–296 (QKVKVKKQEN) are enriched in basic and acidic residues. Residues 382–459 (RKNYSFTREE…ALLKRLEAVK (78 aa)) adopt a coiled-coil conformation. Residues 503–513 (SRTSSATSGLS) are compositionally biased toward polar residues.

The protein belongs to the CFAP97 family. Highly expressed in testis with lower levels detected in other tissues including lung, heart and kidney.

The chain is Cilia- and flagella-associated protein 97 from Mus musculus (Mouse).